The sequence spans 236 residues: Lipoprotein B (236 aa).

Residues 1 to 27 (MNKKYFKKYSSILIFSMSILAPMTLAS) form the signal peptide. Cys28 is lipidated: N-palmitoyl cysteine. Cys28 carries the S-diacylglycerol cysteine lipid modification. Disordered stretches follow at residues 35–112 (EKDK…KSNV) and 134–236 (SEKQ…GDAF). Residues 43 to 60 (STNLSEPNKSNTSKTNTF) show a composition bias toward polar residues. A compositionally biased stretch (basic and acidic residues) spans 61-74 (QDKKDSTNKIDSQE). 2 stretches are compositionally biased toward polar residues: residues 75-112 (SSKTQSQNTSESNQNTKVDSSKTNNLATNQNNPSKSNV) and 143-157 (NASSLNSKQINNTLK). Residues 158–175 (NQDKTKQENDQFKQESKD) show a composition bias toward basic and acidic residues. Positions 193–212 (VISSQSTTRLEMPKNDQSNS) are enriched in polar residues. Residues 215–228 (EDNKKSPESPKWWE) are compositionally biased toward basic and acidic residues.

It belongs to the M.pulmonis LipAB lipoprotein family.

The protein localises to the cell membrane. The sequence is that of Lipoprotein B (lipB) from Mycoplasmopsis pulmonis (strain UAB CTIP) (Mycoplasma pulmonis).